Reading from the N-terminus, the 119-residue chain is Beta-2-microglobulin (119 aa).

The signal sequence occupies residues 1–20 (MARSVTVIFLVLVSLAVVLA). An Ig-like C1-type domain is found at 25 to 114 (PQIQVYSRHP…VTLKEPKTVT (90 aa)). An intrachain disulfide couples Cys-45 to Cys-100.

It belongs to the beta-2-microglobulin family. In terms of assembly, heterodimer of an alpha chain and a beta chain. Beta-2-microglobulin is the beta-chain of major histocompatibility complex class I molecules. Forms a heterotrimer with MR1 and a metabolite antigen.

The protein resides in the secreted. Its function is as follows. Component of the class I major histocompatibility complex (MHC). Involved in the presentation of peptide antigens to the immune system. This is Beta-2-microglobulin (B2m) from Rattus norvegicus (Rat).